A 1072-amino-acid chain; its full sequence is Carbamoyl phosphate synthase large chain (1072 aa).

The interval methionine 1–glutamate 401 is carboxyphosphate synthetic domain. Arginine 129, arginine 169, glycine 175, glycine 176, lysine 208, isoleucine 210, glutamate 215, glycine 241, valine 242, histidine 243, glutamine 284, and glutamate 298 together coordinate ATP. Positions arginine 133–valine 327 constitute an ATP-grasp 1 domain. The Mg(2+) site is built by glutamine 284, glutamate 298, and asparagine 300. The Mn(2+) site is built by glutamine 284, glutamate 298, and asparagine 300. The oligomerization domain stretch occupies residues leucine 402–serine 546. The tract at residues isoleucine 547 to glycine 929 is carbamoyl phosphate synthetic domain. The ATP-grasp 2 domain maps to glutamate 671–leucine 861. ATP-binding residues include arginine 707, arginine 746, glutamate 752, glycine 777, valine 778, histidine 779, serine 780, glutamine 820, and glutamate 832. Residues glutamine 820, glutamate 832, and asparagine 834 each coordinate Mg(2+). Residues glutamine 820, glutamate 832, and asparagine 834 each contribute to the Mn(2+) site. The MGS-like domain occupies isoleucine 930–alanine 1072. The tract at residues isoleucine 930–alanine 1072 is allosteric domain.

It belongs to the CarB family. Composed of two chains; the small (or glutamine) chain promotes the hydrolysis of glutamine to ammonia, which is used by the large (or ammonia) chain to synthesize carbamoyl phosphate. Tetramer of heterodimers (alpha,beta)4. Mg(2+) is required as a cofactor. Requires Mn(2+) as cofactor.

It carries out the reaction hydrogencarbonate + L-glutamine + 2 ATP + H2O = carbamoyl phosphate + L-glutamate + 2 ADP + phosphate + 2 H(+). The catalysed reaction is hydrogencarbonate + NH4(+) + 2 ATP = carbamoyl phosphate + 2 ADP + phosphate + 2 H(+). It participates in amino-acid biosynthesis; L-arginine biosynthesis; carbamoyl phosphate from bicarbonate: step 1/1. It functions in the pathway pyrimidine metabolism; UMP biosynthesis via de novo pathway; (S)-dihydroorotate from bicarbonate: step 1/3. In terms of biological role, large subunit of the glutamine-dependent carbamoyl phosphate synthetase (CPSase). CPSase catalyzes the formation of carbamoyl phosphate from the ammonia moiety of glutamine, carbonate, and phosphate donated by ATP, constituting the first step of 2 biosynthetic pathways, one leading to arginine and/or urea and the other to pyrimidine nucleotides. The large subunit (synthetase) binds the substrates ammonia (free or transferred from glutamine from the small subunit), hydrogencarbonate and ATP and carries out an ATP-coupled ligase reaction, activating hydrogencarbonate by forming carboxy phosphate which reacts with ammonia to form carbamoyl phosphate. This Bacillus cereus (strain AH820) protein is Carbamoyl phosphate synthase large chain.